The primary structure comprises 427 residues: tRNA pseudouridine synthase Pus10 (427 aa).

The Nucleophile role is filled by aspartate 240. Positions 306 and 378 each coordinate substrate.

It belongs to the pseudouridine synthase Pus10 family.

It catalyses the reaction uridine(54) in tRNA = pseudouridine(54) in tRNA. The enzyme catalyses uridine(55) in tRNA = pseudouridine(55) in tRNA. Responsible for synthesis of pseudouridine from uracil-54 and uracil-55 in the psi GC loop of transfer RNAs. In Halorubrum lacusprofundi (strain ATCC 49239 / DSM 5036 / JCM 8891 / ACAM 34), this protein is tRNA pseudouridine synthase Pus10.